A 78-amino-acid chain; its full sequence is Surfactant-associated protein 2 (78 aa).

The first 19 residues, 1–19 (MGSGLPLVLLLTLLGSSHG), serve as a signal peptide directing secretion. N-linked (GlcNAc...) asparagine glycosylation is present at Asn37.

N-glycosylated. As to expression, predominantly expressed in lung, where it is detected in type II pneumocytes in the alveolus, and in nonciliated epithelium in bronchioli (at protein level). Also detected at lower levels in cervix, esophagus, stomach, testis and kidney.

It is found in the secreted. Its subcellular location is the cytoplasmic vesicle. The protein resides in the secretory vesicle. The protein localises to the golgi apparatus. Functionally, putative surfactant protein. The sequence is that of Surfactant-associated protein 2 (SFTA2) from Homo sapiens (Human).